The primary structure comprises 371 residues: MVLDPRDSLLSSYDYPLDPERIAQLPVEPRHAARLLIVQPLGMKPPIARHAEVWDWQEELRAGDLLVINDTRVLKARLRVRRSGGGLAELLVLEPRGEGRWLCLGRPAKRLRPGDQLWLEALGEEPIALQVISKDSASGGRVVQFPSHYANAEQLELLLERYGEVPLPPYIKCHDPSDSERYQTRYASRPGAVAAPTAGLHLSDELLEALKQRGVMLTSVTLHVGLGTFRPVETEDLRHLQLHSEWVEVRDEVVAAVMACRARAGRVIAVGTTSVRALEGAALAGGGFLQSFCGPVDLVIQPGYRFAVVDGLLTNFHLPKSSLLLLVSAMVGRERLLALYAEAIEHHYRFFSYGDAMWIDPGAVLPAARPC.

This sequence belongs to the QueA family. In terms of assembly, monomer.

It is found in the cytoplasm. It carries out the reaction 7-aminomethyl-7-carbaguanosine(34) in tRNA + S-adenosyl-L-methionine = epoxyqueuosine(34) in tRNA + adenine + L-methionine + 2 H(+). Its pathway is tRNA modification; tRNA-queuosine biosynthesis. In terms of biological role, transfers and isomerizes the ribose moiety from AdoMet to the 7-aminomethyl group of 7-deazaguanine (preQ1-tRNA) to give epoxyqueuosine (oQ-tRNA). In Prochlorococcus marinus (strain MIT 9303), this protein is S-adenosylmethionine:tRNA ribosyltransferase-isomerase.